We begin with the raw amino-acid sequence, 112 residues long: Large ribosomal subunit protein bL17 (112 aa).

The protein belongs to the bacterial ribosomal protein bL17 family. Part of the 50S ribosomal subunit. Contacts protein L32.

The protein is Large ribosomal subunit protein bL17 of Desulforamulus reducens (strain ATCC BAA-1160 / DSM 100696 / MI-1) (Desulfotomaculum reducens).